The sequence spans 415 residues: L-cysteine:1D-myo-inositol 2-amino-2-deoxy-alpha-D-glucopyranoside ligase (415 aa).

A disordered region spans residues 1 to 20; it reads MQSWSETAVPSVPGQGPPLR. Cysteine 43 contributes to the Zn(2+) binding site. L-cysteinyl-5'-AMP is bound by residues 43–46, threonine 58, and 81–83; these read CGIT and NVT. A 'HIGH' region motif is present at residues 45 to 55; that stretch reads ITPYDATHLGH. The 'ERGGDP' region signature appears at 187 to 192; the sequence is ERGGDP. Residue tryptophan 227 participates in L-cysteinyl-5'-AMP binding. Residue cysteine 231 coordinates Zn(2+). Position 249–251 (249–251) interacts with L-cysteinyl-5'-AMP; sequence GSD. Histidine 256 is a binding site for Zn(2+). Isoleucine 283 contributes to the L-cysteinyl-5'-AMP binding site. The 'KMSKS' region signature appears at 289–293; that stretch reads KMSKS.

This sequence belongs to the class-I aminoacyl-tRNA synthetase family. MshC subfamily. Monomer. The cofactor is Zn(2+).

It carries out the reaction 1D-myo-inositol 2-amino-2-deoxy-alpha-D-glucopyranoside + L-cysteine + ATP = 1D-myo-inositol 2-(L-cysteinylamino)-2-deoxy-alpha-D-glucopyranoside + AMP + diphosphate + H(+). Catalyzes the ATP-dependent condensation of GlcN-Ins and L-cysteine to form L-Cys-GlcN-Ins. The sequence is that of L-cysteine:1D-myo-inositol 2-amino-2-deoxy-alpha-D-glucopyranoside ligase from Rhodococcus jostii (strain RHA1).